The chain runs to 155 residues: Putative pre-16S rRNA nuclease (155 aa).

The protein belongs to the YqgF nuclease family.

It localises to the cytoplasm. Functionally, could be a nuclease involved in processing of the 5'-end of pre-16S rRNA. The protein is Putative pre-16S rRNA nuclease of Paramagnetospirillum magneticum (strain ATCC 700264 / AMB-1) (Magnetospirillum magneticum).